The primary structure comprises 310 residues: Glutaminase (310 aa).

Residues S67, N118, E161, N168, Y192, Y244, and V262 each coordinate substrate.

It belongs to the glutaminase family. Homotetramer.

It carries out the reaction L-glutamine + H2O = L-glutamate + NH4(+). The chain is Glutaminase from Legionella pneumophila (strain Paris).